A 185-amino-acid chain; its full sequence is Sulfopyruvate decarboxylase subunit beta (185 aa).

Belongs to the TPP enzyme family. In terms of assembly, heterododecamer composed of 6 subunits alpha and 6 subunits beta. Requires thiamine diphosphate as cofactor.

It catalyses the reaction 3-sulfopyruvate + H(+) = sulfoacetaldehyde + CO2. Its pathway is cofactor biosynthesis; coenzyme M biosynthesis; sulfoacetaldehyde from phosphoenolpyruvate and sulfite: step 4/4. Functionally, involved in the biosynthesis of the coenzyme M (2-mercaptoethanesulfonic acid). Catalyzes the decarboxylation of sulfopyruvate to sulfoacetaldehyde. This Methanococcus maripaludis (strain DSM 14266 / JCM 13030 / NBRC 101832 / S2 / LL) protein is Sulfopyruvate decarboxylase subunit beta.